We begin with the raw amino-acid sequence, 97 residues long: Co-chaperonin GroES (97 aa).

Belongs to the GroES chaperonin family. Heptamer of 7 subunits arranged in a ring. Interacts with the chaperonin GroEL.

It is found in the cytoplasm. Functionally, together with the chaperonin GroEL, plays an essential role in assisting protein folding. The GroEL-GroES system forms a nano-cage that allows encapsulation of the non-native substrate proteins and provides a physical environment optimized to promote and accelerate protein folding. GroES binds to the apical surface of the GroEL ring, thereby capping the opening of the GroEL channel. In Enterobacter sp. (strain 638), this protein is Co-chaperonin GroES.